Reading from the N-terminus, the 21-residue chain is AMASSLLSGWGGPTTLLVAPM.

This Pinus strobus (Eastern white pine) protein is Putative NADH dehydrogenase subunit PS9.